A 229-amino-acid chain; its full sequence is Cytochrome c oxidase subunit 2 (229 aa).

Residues 1-14 lie on the Mitochondrial intermembrane side of the membrane; that stretch reads MANPSQFGFQDASS. The helical transmembrane segment at 15 to 45 threads the bilayer; sequence PIMEELVEFHDHALMVALAICSLVLYLLALM. At 46 to 58 the chain is on the mitochondrial matrix side; sequence LVEKLSSNTVDAQ. Residues 59-86 form a helical membrane-spanning segment; that stretch reads EVELIWTILPAIVLILLALPSLQILYMM. The Mitochondrial intermembrane segment spans residues 87-229; the sequence is DEIDEPDLTL…SWSSLLSTDS (143 aa). Residues H160, C195, E197, C199, H203, and M206 each coordinate Cu cation. E197 contacts Mg(2+).

It belongs to the cytochrome c oxidase subunit 2 family. In terms of assembly, component of the cytochrome c oxidase (complex IV, CIV), a multisubunit enzyme composed of 14 subunits. The complex is composed of a catalytic core of 3 subunits MT-CO1, MT-CO2 and MT-CO3, encoded in the mitochondrial DNA, and 11 supernumerary subunits COX4I, COX5A, COX5B, COX6A, COX6B, COX6C, COX7A, COX7B, COX7C, COX8 and NDUFA4, which are encoded in the nuclear genome. The complex exists as a monomer or a dimer and forms supercomplexes (SCs) in the inner mitochondrial membrane with NADH-ubiquinone oxidoreductase (complex I, CI) and ubiquinol-cytochrome c oxidoreductase (cytochrome b-c1 complex, complex III, CIII), resulting in different assemblies (supercomplex SCI(1)III(2)IV(1) and megacomplex MCI(2)III(2)IV(2)). Found in a complex with TMEM177, COA6, COX18, COX20, SCO1 and SCO2. Interacts with TMEM177 in a COX20-dependent manner. Interacts with COX20. Interacts with COX16. Cu cation serves as cofactor.

The protein resides in the mitochondrion inner membrane. It carries out the reaction 4 Fe(II)-[cytochrome c] + O2 + 8 H(+)(in) = 4 Fe(III)-[cytochrome c] + 2 H2O + 4 H(+)(out). Component of the cytochrome c oxidase, the last enzyme in the mitochondrial electron transport chain which drives oxidative phosphorylation. The respiratory chain contains 3 multisubunit complexes succinate dehydrogenase (complex II, CII), ubiquinol-cytochrome c oxidoreductase (cytochrome b-c1 complex, complex III, CIII) and cytochrome c oxidase (complex IV, CIV), that cooperate to transfer electrons derived from NADH and succinate to molecular oxygen, creating an electrochemical gradient over the inner membrane that drives transmembrane transport and the ATP synthase. Cytochrome c oxidase is the component of the respiratory chain that catalyzes the reduction of oxygen to water. Electrons originating from reduced cytochrome c in the intermembrane space (IMS) are transferred via the dinuclear copper A center (CU(A)) of subunit 2 and heme A of subunit 1 to the active site in subunit 1, a binuclear center (BNC) formed by heme A3 and copper B (CU(B)). The BNC reduces molecular oxygen to 2 water molecules using 4 electrons from cytochrome c in the IMS and 4 protons from the mitochondrial matrix. This is Cytochrome c oxidase subunit 2 (MT-CO2) from Struthio camelus (Common ostrich).